We begin with the raw amino-acid sequence, 212 residues long: Glutathione S-transferase (212 aa).

Residues 1–82 (MGMKLHGPAM…YIAHTYADKG (82 aa)) form the GST N-terminal domain. Residues Ser11, 12–13 (PA), 40–41 (HK), 53–54 (QV), and 66–67 (ES) contribute to the glutathione site. The GST C-terminal domain maps to 89 to 212 (DPKKMAIMSV…AWSKAIEYKQ (124 aa)).

The protein belongs to the GST superfamily. Phi family.

The enzyme catalyses RX + glutathione = an S-substituted glutathione + a halide anion + H(+). In terms of biological role, conjugation of reduced glutathione to a wide number of exogenous and endogenous hydrophobic electrophiles. This is Glutathione S-transferase from Hyoscyamus muticus (Egyptian henbane).